Consider the following 369-residue polypeptide: MSDLEQLERQILEDIAAAVDEQGIEAVRVAALGKKGTVSEKLKTLGGMSPEERQMQGPAINGLKNRVTEALSERRTELRKAAVAARLEREKVDVTLPVRESAASRGRIHPISQVIDEITAIFADMGFSIAEGPDIETDYYNFTALNFPEGHPAREMHDTFFFNPDEKGERKLLRTHTSPVQVHTMEKFAAMRDKEGRDEPIRIVIPGKTYRMDSDATHSPMFHQVEGLVVDKSANVANMKWVLEEFCKAFFEVPSVKMRMRPSFFPFTEPSVEVDIQCDRSGPHVKFGEGNDWLEILGCGMVHPNVLRMSGYDPEVYQGFAWGMGIGRIAMLKYGMPDLRAFFDADVRWIEHYGFRPLDIPTLFGGLSA.

Glu-269 lines the Mg(2+) pocket.

It belongs to the class-II aminoacyl-tRNA synthetase family. Phe-tRNA synthetase alpha subunit type 1 subfamily. In terms of assembly, tetramer of two alpha and two beta subunits. The cofactor is Mg(2+).

It is found in the cytoplasm. It carries out the reaction tRNA(Phe) + L-phenylalanine + ATP = L-phenylalanyl-tRNA(Phe) + AMP + diphosphate + H(+). In Brucella melitensis biotype 1 (strain ATCC 23456 / CCUG 17765 / NCTC 10094 / 16M), this protein is Phenylalanine--tRNA ligase alpha subunit.